A 377-amino-acid polypeptide reads, in one-letter code: Chaperone protein DnaJ (377 aa).

The 66-residue stretch at 4–69 (DYYEALGVTR…QKRAAYDRFG (66 aa)) folds into the J domain. A CR-type zinc finger spans residues 135-213 (GKTAQIRVPT…CHGQGRVTQE (79 aa)). Positions 148, 151, 165, 168, 187, 190, 201, and 204 each coordinate Zn(2+). CXXCXGXG motif repeat units lie at residues 148-155 (CDECSGSG), 165-172 (CTMCSGSG), 187-194 (CPGCNGRG), and 201-208 (CEKCHGQG).

This sequence belongs to the DnaJ family. Homodimer. It depends on Zn(2+) as a cofactor.

The protein localises to the cytoplasm. Functionally, participates actively in the response to hyperosmotic and heat shock by preventing the aggregation of stress-denatured proteins and by disaggregating proteins, also in an autonomous, DnaK-independent fashion. Unfolded proteins bind initially to DnaJ; upon interaction with the DnaJ-bound protein, DnaK hydrolyzes its bound ATP, resulting in the formation of a stable complex. GrpE releases ADP from DnaK; ATP binding to DnaK triggers the release of the substrate protein, thus completing the reaction cycle. Several rounds of ATP-dependent interactions between DnaJ, DnaK and GrpE are required for fully efficient folding. Also involved, together with DnaK and GrpE, in the DNA replication of plasmids through activation of initiation proteins. This Brucella ovis (strain ATCC 25840 / 63/290 / NCTC 10512) protein is Chaperone protein DnaJ.